A 65-amino-acid polypeptide reads, in one-letter code: Myosin-11 (65 aa).

Positions 1 to 65 (RSGKLDAFLV…NWQWWRLFTK (65 aa)) constitute a Myosin motor domain.

Belongs to the TRAFAC class myosin-kinesin ATPase superfamily. Myosin family. In terms of assembly, muscle myosin is a hexameric protein that consists of 2 heavy chain subunits (MHC), 2 alkali light chain subunits (MLC) and 2 regulatory light chain subunits (MLC-2).

It is found in the melanosome. Its subcellular location is the cytoplasm. The protein localises to the myofibril. Its function is as follows. Muscle contraction. This is Myosin-11 (MYH11) from Sus scrofa (Pig).